The following is a 463-amino-acid chain: Glutamate--tRNA ligase 1 (463 aa).

Residues 10 to 20 carry the 'HIGH' region motif; sequence PSPTGYLHIGG. Positions 238–242 match the 'KMSKS' region motif; it reads KLSKR. Lys241 lines the ATP pocket.

The protein belongs to the class-I aminoacyl-tRNA synthetase family. Glutamate--tRNA ligase type 1 subfamily. Monomer.

It localises to the cytoplasm. The enzyme catalyses tRNA(Glu) + L-glutamate + ATP = L-glutamyl-tRNA(Glu) + AMP + diphosphate. Its function is as follows. Catalyzes the attachment of glutamate to tRNA(Glu) in a two-step reaction: glutamate is first activated by ATP to form Glu-AMP and then transferred to the acceptor end of tRNA(Glu). This chain is Glutamate--tRNA ligase 1, found in Helicobacter pylori (strain Shi470).